The chain runs to 267 residues: MELERIVSSALFAFVQTHLPEADLSGLDEVIFSYVLGVLEDLGPSGPSEENFDMEAFIEMMEAYVPGFAHIHRGIIEDMVQTLSVQLSSARNKETLRRPEKLKEESRPPAATGNTQDEAAAAEEEQPGVDVLLEVFPTCSMEQAQWVLAKARGNLEEAVQMLIEGKEEGPPGWGGPNQDLPRRLRGPRKEELKSFILQKYMMVDRAEDQKTHRPMAPKEAPKKLIRYIDNQVVSTKGERFKDVRNPETEEMKATYINLKPARKYRFH.

Residues 90-125 are disordered; it reads ARNKETLRRPEKLKEESRPPAATGNTQDEAAAAEEE. Basic and acidic residues predominate over residues 91–107; the sequence is RNKETLRRPEKLKEESR. The CUE domain occupies 124–167; that stretch reads EEQPGVDVLLEVFPTCSMEQAQWVLAKARGNLEEAVQMLIEGKE.

The protein belongs to the CUEDC2 family. Interacts with PGR and ESR1.

It is found in the cytoplasm. The protein localises to the nucleus. Controls PGR and ESR1 protein levels through their targeting for ubiquitination and subsequent proteasomal degradation. The protein is CUE domain-containing protein 2 (Cuedc2) of Rattus norvegicus (Rat).